The following is a 517-amino-acid chain: Endoglycoceramidase (517 aa).

An N-terminal signal peptide occupies residues M1–G17. N-linked (GlcNAc...) asparagine glycosylation is present at N99. E230 acts as the Proton donor in catalysis. 3 N-linked (GlcNAc...) asparagine glycosylation sites follow: N298, N380, and N393.

It belongs to the glycosyl hydrolase 5 (cellulase A) family. In terms of tissue distribution, expressed uniformly in digestive cells, tentacles and peduncle regions suggesting expression in the endoderm throughout the whole body (at protein level).

The protein localises to the secreted. It carries out the reaction an oligoglycosyl-(1-&gt;4)-beta-D-glucosyl-(1&lt;-&gt;1)-ceramide + H2O = an oligoglycosyl-(1-&gt;4)-D-glucose + an N-acyl-sphingoid base. Cu(2+), zinc, manganese, calcium, magnesium and EDTA have no significant effects on enzyme activity. Enzyme requires presence of detergents such as Triton X-100 and Lubrol PX for the hydrolysis of glycosphingolipids. Taurodeoxycholate strongly inhibits the enzyme activity. In terms of biological role, hydrolysis of the glycosidic linkage between oligosaccharides and ceramides of glycosphingolipids, optimal substrates appear to be the glycosphingolipids with a gangliotetraose structure. This chain is Endoglycoceramidase, found in Hydra vulgaris (Hydra).